The primary structure comprises 140 residues: 3-hydroxyacyl-[acyl-carrier-protein] dehydratase FabZ (140 aa).

The active site involves His48.

Belongs to the thioester dehydratase family. FabZ subfamily.

It localises to the cytoplasm. The catalysed reaction is a (3R)-hydroxyacyl-[ACP] = a (2E)-enoyl-[ACP] + H2O. Functionally, involved in unsaturated fatty acids biosynthesis. Catalyzes the dehydration of short chain beta-hydroxyacyl-ACPs and long chain saturated and unsaturated beta-hydroxyacyl-ACPs. The sequence is that of 3-hydroxyacyl-[acyl-carrier-protein] dehydratase FabZ from Oceanobacillus iheyensis (strain DSM 14371 / CIP 107618 / JCM 11309 / KCTC 3954 / HTE831).